The chain runs to 342 residues: Ribosomal RNA small subunit methyltransferase C (342 aa).

This sequence belongs to the methyltransferase superfamily. RsmC family. In terms of assembly, monomer.

Its subcellular location is the cytoplasm. It carries out the reaction guanosine(1207) in 16S rRNA + S-adenosyl-L-methionine = N(2)-methylguanosine(1207) in 16S rRNA + S-adenosyl-L-homocysteine + H(+). Its function is as follows. Specifically methylates the guanine in position 1207 of 16S rRNA in the 30S particle. This is Ribosomal RNA small subunit methyltransferase C from Salmonella heidelberg (strain SL476).